We begin with the raw amino-acid sequence, 84 residues long: Sulfur carrier protein TusA (84 aa).

The active-site Cysteine persulfide intermediate is the Cys21.

This sequence belongs to the sulfur carrier protein TusA family.

It localises to the cytoplasm. Sulfur carrier protein which probably makes part of a sulfur-relay system. This is Sulfur carrier protein TusA from Pseudomonas syringae pv. syringae (strain B728a).